The primary structure comprises 291 residues: Lysosomal amino acid transporter 1 homolog (291 aa).

Residues methionine 1–alanine 37 lie on the Lumenal side of the membrane. Asparagine 10 is a glycosylation site (N-linked (GlcNAc...) asparagine). A PQ-loop 1 domain is found at tryptophan 34–tyrosine 100. The chain crosses the membrane as a helical span at residues serine 38 to isoleucine 58. The Cytoplasmic segment spans residues lysine 59–serine 71. A helical membrane pass occupies residues leucine 72–alanine 92. Residues aspartate 93 to glutamine 98 are Lumenal-facing. A helical transmembrane segment spans residues threonine 99 to tyrosine 119. Residues lysine 120–serine 134 are Cytoplasmic-facing. The chain crosses the membrane as a helical span at residues valine 135–valine 155. The Lumenal portion of the chain corresponds to alanine 156 to valine 182. A helical transmembrane segment spans residues isoleucine 183–isoleucine 203. The 60-residue stretch at glycine 184 to glutamine 243 folds into the PQ-loop 2 domain. Topologically, residues arginine 204 to glycine 214 are cytoplasmic. A helical transmembrane segment spans residues isoleucine 215–leucine 235. Over leucine 236–proline 254 the chain is Lumenal. A helical transmembrane segment spans residues tryptophan 255–valine 275. The Cytoplasmic portion of the chain corresponds to tyrosine 276 to serine 291. The short motif at leucine 288–leucine 289 is the Di-leucine motif element.

The protein belongs to the laat-1 family.

The protein resides in the lysosome membrane. In terms of biological role, amino acid transporter that specifically mediates the pH-dependent export of the cationic amino acids arginine, histidine and lysine from lysosomes. This is Lysosomal amino acid transporter 1 homolog from Homo sapiens (Human).